A 709-amino-acid polypeptide reads, in one-letter code: Phosphoribosylformylglycinamidine synthase subunit PurL (709 aa).

Residue histidine 36 is part of the active site. Residues tyrosine 39 and lysine 80 each contribute to the ATP site. Residue glutamate 82 participates in Mg(2+) binding. Substrate-binding positions include 83-86 and arginine 105; that span reads SHNH. Catalysis depends on histidine 84, which acts as the Proton acceptor. Position 106 (aspartate 106) interacts with Mg(2+). Glutamine 226 is a substrate binding site. Aspartate 252 contributes to the Mg(2+) binding site. Position 294–296 (294–296) interacts with substrate; that stretch reads ETQ. Residues aspartate 470 and glycine 507 each contribute to the ATP site. Serine 510 is a binding site for substrate.

This sequence belongs to the FGAMS family. In terms of assembly, monomer. Part of the FGAM synthase complex composed of 1 PurL, 1 PurQ and 2 PurS subunits.

Its subcellular location is the cytoplasm. It carries out the reaction N(2)-formyl-N(1)-(5-phospho-beta-D-ribosyl)glycinamide + L-glutamine + ATP + H2O = 2-formamido-N(1)-(5-O-phospho-beta-D-ribosyl)acetamidine + L-glutamate + ADP + phosphate + H(+). The protein operates within purine metabolism; IMP biosynthesis via de novo pathway; 5-amino-1-(5-phospho-D-ribosyl)imidazole from N(2)-formyl-N(1)-(5-phospho-D-ribosyl)glycinamide: step 1/2. Its function is as follows. Part of the phosphoribosylformylglycinamidine synthase complex involved in the purines biosynthetic pathway. Catalyzes the ATP-dependent conversion of formylglycinamide ribonucleotide (FGAR) and glutamine to yield formylglycinamidine ribonucleotide (FGAM) and glutamate. The FGAM synthase complex is composed of three subunits. PurQ produces an ammonia molecule by converting glutamine to glutamate. PurL transfers the ammonia molecule to FGAR to form FGAM in an ATP-dependent manner. PurS interacts with PurQ and PurL and is thought to assist in the transfer of the ammonia molecule from PurQ to PurL. The protein is Phosphoribosylformylglycinamidine synthase subunit PurL of Saccharolobus islandicus (strain M.14.25 / Kamchatka #1) (Sulfolobus islandicus).